Reading from the N-terminus, the 115-residue chain is Phosphoribosyl-AMP cyclohydrolase (115 aa).

Asp80 contributes to the Mg(2+) binding site. Residue Cys81 coordinates Zn(2+). Mg(2+) contacts are provided by Asp82 and Asp84. Residues Cys97 and Cys104 each coordinate Zn(2+).

It belongs to the PRA-CH family. As to quaternary structure, homodimer. The cofactor is Mg(2+). Zn(2+) is required as a cofactor.

It localises to the cytoplasm. It carries out the reaction 1-(5-phospho-beta-D-ribosyl)-5'-AMP + H2O = 1-(5-phospho-beta-D-ribosyl)-5-[(5-phospho-beta-D-ribosylamino)methylideneamino]imidazole-4-carboxamide. Its pathway is amino-acid biosynthesis; L-histidine biosynthesis; L-histidine from 5-phospho-alpha-D-ribose 1-diphosphate: step 3/9. In terms of biological role, catalyzes the hydrolysis of the adenine ring of phosphoribosyl-AMP. The chain is Phosphoribosyl-AMP cyclohydrolase from Mycolicibacterium gilvum (strain PYR-GCK) (Mycobacterium gilvum (strain PYR-GCK)).